Reading from the N-terminus, the 261-residue chain is Acetoacetate decarboxylase 2 (261 aa).

Residue K116 is the Schiff-base intermediate with acetoacetate of the active site.

This sequence belongs to the ADC family.

It catalyses the reaction acetoacetate + H(+) = acetone + CO2. Its function is as follows. Catalyzes the conversion of acetoacetate to acetone and carbon dioxide. The chain is Acetoacetate decarboxylase 2 from Mesorhizobium japonicum (strain LMG 29417 / CECT 9101 / MAFF 303099) (Mesorhizobium loti (strain MAFF 303099)).